Here is a 467-residue protein sequence, read N- to C-terminus: ATP synthase subunit beta 1 (467 aa).

An ATP-binding site is contributed by 150–157 (GGAGVGKT).

It belongs to the ATPase alpha/beta chains family. F-type ATPases have 2 components, CF(1) - the catalytic core - and CF(0) - the membrane proton channel. CF(1) has five subunits: alpha(3), beta(3), gamma(1), delta(1), epsilon(1). CF(0) has three main subunits: a(1), b(2) and c(9-12). The alpha and beta chains form an alternating ring which encloses part of the gamma chain. CF(1) is attached to CF(0) by a central stalk formed by the gamma and epsilon chains, while a peripheral stalk is formed by the delta and b chains.

The protein resides in the cell inner membrane. The enzyme catalyses ATP + H2O + 4 H(+)(in) = ADP + phosphate + 5 H(+)(out). Produces ATP from ADP in the presence of a proton gradient across the membrane. The catalytic sites are hosted primarily by the beta subunits. The protein is ATP synthase subunit beta 1 of Vibrio campbellii (strain ATCC BAA-1116).